The following is a 377-amino-acid chain: Sodium-dependent organic anion transporter (377 aa).

Residues 1 to 29 (MRANCSSSSACPANSSEEELPVGLEVHGN) are Extracellular-facing. N4 carries an N-linked (GlcNAc...) asparagine glycan. A helical transmembrane segment spans residues 30-50 (LELVFTVVSTVMMGLLMFSLG). Over 51-67 (CSVEIRKLWSHIRRPWG) the chain is Cytoplasmic. The helical transmembrane segment at 68-88 (IAVGLLCQFGLMPFTAYLLAI) threads the bilayer. Over 89 to 97 (SFSLKPVQA) the chain is Extracellular. Residues 98 to 118 (IAVLIMGCCPGGTISNIFTFW) form a helical membrane-spanning segment. Topologically, residues 119-133 (VDGDMDLSISMTTCS) are cytoplasmic. The helical transmembrane segment at 134-154 (TVAALGMMPLCIYLYTWSWSL) threads the bilayer. Over 155–159 (QQNLT) the chain is Extracellular. N157 carries N-linked (GlcNAc...) asparagine glycosylation. Residues 160–180 (IPYQNIGITLVCLTIPVAFGV) traverse the membrane as a helical segment. Residues 181 to 195 (YVNYRWPKQSKIILK) lie on the Cytoplasmic side of the membrane. Residues 196–216 (IGAVVGGVLLLVVAVAGVVLA) form a helical membrane-spanning segment. At 217 to 226 (KGSWNSDITL) the chain is on the extracellular side. A helical transmembrane segment spans residues 227–247 (LTISFIFPLIGHVTGFLLALF). The Cytoplasmic segment spans residues 248–266 (THQSWQRCRTISLETGAQN). Residues 267–285 (IQMCITMLQLSFTAEHLVQ) form a helical membrane-spanning segment. Residues 286–290 (MLSFP) lie on the Extracellular side of the membrane. Residues 291 to 311 (LAYGLFQLIDGFLIVAAYQTY) traverse the membrane as a helical segment. Residues 312 to 377 (KRRLKNKHGK…EPVGHITSCE (66 aa)) are Cytoplasmic-facing.

Belongs to the bile acid:sodium symporter (BASS) (TC 2.A.28) family. Post-translationally, glycosylated. In terms of tissue distribution, highly expressed in testis, placenta and pancreas. Moderately expressed in heart, lung and mammary gland. Weakly expressed in brain, colon, kidney, liver, ovary, prostate, small intestine, spleen and thymus.

It is found in the membrane. It catalyses the reaction estrone 3-sulfate(out) + 2 Na(+)(out) = estrone 3-sulfate(in) + 2 Na(+)(in). The catalysed reaction is 17beta-estradiol 3-sulfate(out) + 2 Na(+)(out) = 17beta-estradiol 3-sulfate(in) + 2 Na(+)(in). The enzyme catalyses dehydroepiandrosterone 3-sulfate(out) + 2 Na(+)(out) = dehydroepiandrosterone 3-sulfate(in) + 2 Na(+)(in). It carries out the reaction androst-5-ene-diol 3-sulfate(out) + 2 Na(+)(out) = androst-5-ene-diol 3-sulfate(in) + 2 Na(+)(in). It catalyses the reaction pregnenolone sulfate(out) + 2 Na(+)(out) = pregnenolone sulfate(in) + 2 Na(+)(in). The catalysed reaction is taurolithocholate 3-sulfate(out) + 2 Na(+)(out) = taurolithocholate 3-sulfate(in) + 2 Na(+)(in). The enzyme catalyses androsterone 3alpha-sulfate(out) + 2 Na(+)(out) = androsterone 3alpha-sulfate(in) + 2 Na(+)(in). It carries out the reaction 5alpha-dihydrotestosterone sulfate(out) + 2 Na(+)(out) = 5alpha-dihydrotestosterone sulfate(in) + 2 Na(+)(in). It catalyses the reaction 17beta-estradiol 17-sulfate(out) + 2 Na(+)(out) = 17beta-estradiol 17-sulfate(in) + 2 Na(+)(in). The catalysed reaction is 17alpha-hydroxypregnenolone 3-sulfate(out) + 2 Na(+)(out) = 17alpha-hydroxypregnenolone 3-sulfate(in) + 2 Na(+)(in). The enzyme catalyses epiandrosterone 3-sulfate(out) + 2 Na(+)(out) = epiandrosterone 3-sulfate(in) + 2 Na(+)(in). It carries out the reaction epitestosterone 17-sulfate(out) + 2 Na(+)(out) = epitestosterone 17-sulfate(in) + 2 Na(+)(in). It catalyses the reaction testosterone 17-sulfate(out) + 2 Na(+)(out) = testosterone 17-sulfate(in) + 2 Na(+)(in). The catalysed reaction is 16alpha-hydroxydehydroepiandrosterone 3-sulfate(out) + 2 Na(+)(out) = 16alpha-hydroxydehydroepiandrosterone 3-sulfate(in) + 2 Na(+)(in). Transports sulfoconjugated steroid hormones from the extracellular compartment into the cytosol in a sodium-dependent manner without hydrolysis. Steroid sulfate hormones are commonly considered to be biologically inactive metabolites, that may be activated by steroid sulfatases into free steroids. May play an important role by delivering sulfoconjugated steroids to specific target cells in reproductive organs. May play a role transporting the estriol precursor 16alpha-hydroxydehydroepiandrosterone 3-sulfate (16a-OH-DHEAS) at the fetal blood vessel endothelium. Can also transport other sulfoconjugated molecules such as taurolithocholic acid-3-sulfate and sulfoconjugated pyrenes. This is Sodium-dependent organic anion transporter (SLC10A6) from Homo sapiens (Human).